We begin with the raw amino-acid sequence, 288 residues long: Pyridoxal kinase PdxY (288 aa).

Substrate-binding positions include Ser-12 and 47 to 48; that span reads TQ. Residues Asp-114, Glu-151, Lys-184, and 211–214 contribute to the ATP site; that span reads RPLL. A substrate-binding site is contributed by Asp-225.

Belongs to the pyridoxine kinase family. PdxY subfamily. Homodimer. It depends on Mg(2+) as a cofactor.

It carries out the reaction pyridoxal + ATP = pyridoxal 5'-phosphate + ADP + H(+). It functions in the pathway cofactor metabolism; pyridoxal 5'-phosphate salvage; pyridoxal 5'-phosphate from pyridoxal: step 1/1. In terms of biological role, pyridoxal kinase involved in the salvage pathway of pyridoxal 5'-phosphate (PLP). Catalyzes the phosphorylation of pyridoxal to PLP. This is Pyridoxal kinase PdxY from Pseudomonas paraeruginosa (strain DSM 24068 / PA7) (Pseudomonas aeruginosa (strain PA7)).